Here is a 190-residue protein sequence, read N- to C-terminus: Thymidylate kinase (190 aa).

7-14 (GVDTCGKS) is a binding site for ATP.

This sequence belongs to the thymidylate kinase family.

The enzyme catalyses dTMP + ATP = dTDP + ADP. Its function is as follows. Phosphorylation of dTMP to form dTDP in both de novo and salvage pathways of dTTP synthesis. The chain is Thymidylate kinase from Wolinella succinogenes (strain ATCC 29543 / DSM 1740 / CCUG 13145 / JCM 31913 / LMG 7466 / NCTC 11488 / FDC 602W) (Vibrio succinogenes).